Reading from the N-terminus, the 319-residue chain is ATP-dependent 6-phosphofructokinase (319 aa).

Glycine 11 is an ATP binding site. Residues 21 to 25 (RSVVR) and aspartate 59 contribute to the ADP site. ATP-binding positions include 72–73 (RC) and 102–105 (GDGS). A Mg(2+)-binding site is contributed by aspartate 103. Residue 125–127 (TID) coordinates substrate. Aspartate 127 acts as the Proton acceptor in catalysis. Residue arginine 154 participates in ADP binding. Substrate contacts are provided by residues arginine 162 and 169 to 171 (MGR). Residues 185 to 187 (GAE), arginine 211, and 213 to 215 (KKH) each bind ADP. Residues glutamate 222, arginine 243, and 249–252 (HVQR) contribute to the substrate site.

This sequence belongs to the phosphofructokinase type A (PFKA) family. ATP-dependent PFK group I subfamily. Prokaryotic clade 'B1' sub-subfamily. As to quaternary structure, homotetramer. The cofactor is Mg(2+).

It localises to the cytoplasm. It catalyses the reaction beta-D-fructose 6-phosphate + ATP = beta-D-fructose 1,6-bisphosphate + ADP + H(+). It functions in the pathway carbohydrate degradation; glycolysis; D-glyceraldehyde 3-phosphate and glycerone phosphate from D-glucose: step 3/4. Its activity is regulated as follows. Allosterically activated by ADP and other diphosphonucleosides, and allosterically inhibited by phosphoenolpyruvate. Its function is as follows. Catalyzes the phosphorylation of D-fructose 6-phosphate to fructose 1,6-bisphosphate by ATP, the first committing step of glycolysis. This chain is ATP-dependent 6-phosphofructokinase, found in Geobacillus stearothermophilus (Bacillus stearothermophilus).